A 473-amino-acid polypeptide reads, in one-letter code: Cysteine--tRNA ligase (473 aa).

C30 contributes to the Zn(2+) binding site. A 'HIGH' region motif is present at residues 32–42 (MTVYDYCHIGH). Zn(2+)-binding residues include C213, H238, and E242. The short motif at 270–274 (KMSKS) is the 'KMSKS' region element. K273 contacts ATP.

The protein belongs to the class-I aminoacyl-tRNA synthetase family. In terms of assembly, monomer. Requires Zn(2+) as cofactor.

The protein resides in the cytoplasm. The enzyme catalyses tRNA(Cys) + L-cysteine + ATP = L-cysteinyl-tRNA(Cys) + AMP + diphosphate. The chain is Cysteine--tRNA ligase from Acinetobacter baumannii (strain AB307-0294).